Here is a 263-residue protein sequence, read N- to C-terminus: Acyl-[acyl-carrier-protein]--UDP-N-acetylglucosamine O-acyltransferase (263 aa).

It belongs to the transferase hexapeptide repeat family. LpxA subfamily. In terms of assembly, homotrimer.

Its subcellular location is the cytoplasm. The catalysed reaction is a (3R)-hydroxyacyl-[ACP] + UDP-N-acetyl-alpha-D-glucosamine = a UDP-3-O-[(3R)-3-hydroxyacyl]-N-acetyl-alpha-D-glucosamine + holo-[ACP]. The protein operates within glycolipid biosynthesis; lipid IV(A) biosynthesis; lipid IV(A) from (3R)-3-hydroxytetradecanoyl-[acyl-carrier-protein] and UDP-N-acetyl-alpha-D-glucosamine: step 1/6. Its function is as follows. Involved in the biosynthesis of lipid A, a phosphorylated glycolipid that anchors the lipopolysaccharide to the outer membrane of the cell. This is Acyl-[acyl-carrier-protein]--UDP-N-acetylglucosamine O-acyltransferase from Stenotrophomonas maltophilia (strain K279a).